Here is a 213-residue protein sequence, read N- to C-terminus: Glycerol-3-phosphate acyltransferase (213 aa).

The next 6 helical transmembrane spans lie at 2 to 22 (ITIV…GLWI), 54 to 74 (MATF…PIMF), 80 to 100 (SPLI…FAGF), 110 to 130 (AGVV…VFFG), 143 to 163 (VTAS…GFIL), and 165 to 185 (NYDP…IIRH).

The protein belongs to the PlsY family. Probably interacts with PlsX.

Its subcellular location is the cell membrane. The enzyme catalyses an acyl phosphate + sn-glycerol 3-phosphate = a 1-acyl-sn-glycero-3-phosphate + phosphate. It functions in the pathway lipid metabolism; phospholipid metabolism. Functionally, catalyzes the transfer of an acyl group from acyl-phosphate (acyl-PO(4)) to glycerol-3-phosphate (G3P) to form lysophosphatidic acid (LPA). This enzyme utilizes acyl-phosphate as fatty acyl donor, but not acyl-CoA or acyl-ACP. In Streptococcus pneumoniae (strain Taiwan19F-14), this protein is Glycerol-3-phosphate acyltransferase.